The chain runs to 226 residues: Putative O-methyltransferase Mvan_4497 (226 aa).

Residues Val-53, Glu-75, 77-78, Ser-83, Asp-101, and Val-102 each bind S-adenosyl-L-methionine; that span reads GT. Asp-149 contacts substrate.

This sequence belongs to the class I-like SAM-binding methyltransferase superfamily. Cation-dependent O-methyltransferase family.

The sequence is that of Putative O-methyltransferase Mvan_4497 from Mycolicibacterium vanbaalenii (strain DSM 7251 / JCM 13017 / BCRC 16820 / KCTC 9966 / NRRL B-24157 / PYR-1) (Mycobacterium vanbaalenii).